A 215-amino-acid chain; its full sequence is Adenylate kinase (215 aa).

10 to 15 lines the ATP pocket; sequence GAGKGT. An NMP region spans residues 30–59; that stretch reads STGDIFRANISGKTELGMKAKGYMDKGLLV. AMP is bound by residues Thr-31, Arg-36, 57–59, 85–88, and Gln-92; these read LLV and GFPR. The LID stretch occupies residues 126 to 163; it reads GRRVCSKCGASYHIEYNPTKVEGICDLCGSPVVQRKDD. Arg-127 contributes to the ATP binding site. Cys-130 and Cys-133 together coordinate Zn(2+). 136-137 contributes to the ATP binding site; the sequence is SY. Zn(2+) is bound by residues Cys-150 and Cys-153. The AMP site is built by Arg-160 and Arg-171. Gln-199 is a binding site for ATP.

This sequence belongs to the adenylate kinase family. In terms of assembly, monomer.

The protein localises to the cytoplasm. It catalyses the reaction AMP + ATP = 2 ADP. The protein operates within purine metabolism; AMP biosynthesis via salvage pathway; AMP from ADP: step 1/1. Its function is as follows. Catalyzes the reversible transfer of the terminal phosphate group between ATP and AMP. Plays an important role in cellular energy homeostasis and in adenine nucleotide metabolism. In Clostridium acetobutylicum (strain ATCC 824 / DSM 792 / JCM 1419 / IAM 19013 / LMG 5710 / NBRC 13948 / NRRL B-527 / VKM B-1787 / 2291 / W), this protein is Adenylate kinase.